The sequence spans 420 residues: Reticulon-4 receptor-like 2 (420 aa).

A signal peptide spans 1–46 (MLPGLRRLLQAPASACLLLMLLALPLAAPSCPMLCTCYSSPPTVSC). 2 cysteine pairs are disulfide-bonded: C31/C37 and C35/C46. The region spanning 47 to 60 (QANNFSSVPLSLPP) is the LRRNT domain. Residue N50 is glycosylated (N-linked (GlcNAc...) asparagine). 8 LRR repeats span residues 61 to 82 (STQR…TFGS), 83 to 104 (NLLT…TFRH), 107 to 129 (ALEE…TFQG), 132 to 153 (RLQS…IFRG), 156 to 177 (SLQY…LFAD), 180 to 201 (NLSH…VFRG), 204 to 225 (SLDR…AFRG), and 228 to 249 (RLTI…ALAD). N93 carries an N-linked (GlcNAc...) asparagine glycan. N236 carries an N-linked (GlcNAc...) asparagine glycan. The LRRCT domain maps to 261-312 (NPWACDCRARPLWAWFQRARVSSSDVTCATPPERQGRDLRALREADFQACPP). Cystine bridges form between C265/C288 and C267/C310. Positions 308 to 399 (QACPPAAPTR…CQAPPDSRGP (92 aa)) are disordered. The interval 315–327 (PTRPGSRARGNSS) is important for interaction with MAG. A compositionally biased stretch (basic and acidic residues) spans 351–360 (LPAEDSRGRQ). C390 carries GPI-anchor amidated cysteine lipidation. A propeptide spans 391–420 (QAPPDSRGPALSAGLPSPLLCLLLLVPHHL) (removed in mature form).

Belongs to the Nogo receptor family. Interaction with MAG is controversial, and may be indirect. Does not interact with MAG, OMG and RTN4. Interacts with MAG. Undergoes zinc metalloproteinase-mediated ectodomain shedding in neuroblastoma cells; is released both as a full-length ectodomain and an N-terminal fragment containing the leucine-rich repeat (LRR) region of the protein. In terms of processing, N-glycosylated. As to expression, highly expressed in brain and liver. Expressed at lower levels in kidney, mammary gland, placenta, skeletal muscle, spleen and thyroid.

The protein localises to the cell membrane. It is found in the membrane raft. Its subcellular location is the cell projection. It localises to the dendrite. The protein resides in the perikaryon. The protein localises to the axon. Functionally, cell surface receptor that plays a functionally redundant role in the inhibition of neurite outgrowth mediated by MAG. Plays a functionally redundant role in postnatal brain development. Contributes to normal axon migration across the brain midline and normal formation of the corpus callosum. Does not seem to play a significant role in regulating axon regeneration in the adult central nervous system. Protects motoneurons against apoptosis; protection against apoptosis is probably mediated by MAG. Like other family members, plays a role in restricting the number dendritic spines and the number of synapses that are formed during brain development. Signaling mediates activation of Rho and downstream reorganization of the actin cytoskeleton. In Homo sapiens (Human), this protein is Reticulon-4 receptor-like 2.